Here is a 772-residue protein sequence, read N- to C-terminus: Putative ribosomal protein S6 kinase alpha-2 (772 aa).

One can recognise a Protein kinase 1 domain in the interval 17 to 284; that stretch reads FALLRVLGKG…VDEIKNHKFM (268 aa). Residues 23–31 and Lys-49 contribute to the ATP site; that span reads LGKGAYGKV. Residue Asp-145 is the Proton acceptor of the active site. Phosphoserine; by autocatalysis occurs at positions 180, 342, and 347. In terms of domain architecture, AGC-kinase C-terminal spans 285–353; that stretch reads SSIDWDAAVK…VSPSVIFAND (69 aa). Residues 382 to 653 form the Protein kinase 2 domain; the sequence is KSDAGLLGKG…MQELTAHMWL (272 aa). ATP contacts are provided by residues 388-396 and Lys-411; that span reads LGKGAFSVV. Asp-500 functions as the Proton acceptor in the catalytic mechanism. Residues 706–772 are disordered; that stretch reads RGIKRQSGDK…IRETRGSDSS (67 aa). Phosphoserine; by autocatalysis is present on Ser-712. Polar residues-rich tracts occupy residues 718-727 and 739-748; these read SGNSKNSRVT and EMTSSTSRPS.

It belongs to the protein kinase superfamily. AGC Ser/Thr protein kinase family. S6 kinase subfamily. Mg(2+) is required as a cofactor.

It carries out the reaction L-seryl-[protein] + ATP = O-phospho-L-seryl-[protein] + ADP + H(+). The catalysed reaction is L-threonyl-[protein] + ATP = O-phospho-L-threonyl-[protein] + ADP + H(+). Its activity is regulated as follows. Activated by multiple phosphorylations on threonine and serine residues. Functionally, serine/threonine kinase that may play a role in mediating the mitogen- and stress-induced effects on transcription. May repress transcription via phosphorylation of 'Ser-1' of histone H2A. May phosphorylate histone H3. This chain is Putative ribosomal protein S6 kinase alpha-2 (rskn-2), found in Caenorhabditis elegans.